Consider the following 335-residue polypeptide: Ornithine carbamoyltransferase (335 aa).

Carbamoyl phosphate contacts are provided by residues 60–63 (STRT), Q87, R111, and 138–141 (HPTQ). L-ornithine contacts are provided by residues N171, D235, and 239 to 240 (SM). Residues 277 to 278 (CL) and R322 each bind carbamoyl phosphate.

It belongs to the aspartate/ornithine carbamoyltransferase superfamily. OTCase family.

The protein resides in the cytoplasm. It carries out the reaction carbamoyl phosphate + L-ornithine = L-citrulline + phosphate + H(+). Its pathway is amino-acid biosynthesis; L-arginine biosynthesis; L-arginine from L-ornithine and carbamoyl phosphate: step 1/3. In terms of biological role, reversibly catalyzes the transfer of the carbamoyl group from carbamoyl phosphate (CP) to the N(epsilon) atom of ornithine (ORN) to produce L-citrulline. The sequence is that of Ornithine carbamoyltransferase from Streptomyces avermitilis (strain ATCC 31267 / DSM 46492 / JCM 5070 / NBRC 14893 / NCIMB 12804 / NRRL 8165 / MA-4680).